A 573-amino-acid polypeptide reads, in one-letter code: Probable CoA ligase CCL13 (573 aa).

ATP is bound by residues 216-224 (TSGTTARPK), 352-357 (HIYGLT), D449, 461-464 (LKDR), and K556. The tract at residues 284-352 (SPKAIFDNIH…MEEMGFQVNH (69 aa)) is SBD1. The segment at 353–429 (IYGLTETHGP…FRGNTVMSGY (77 aa)) is SBD2.

Belongs to the ATP-dependent AMP-binding enzyme family.

It is found in the cytoplasm. It localises to the cytosol. The protein is Probable CoA ligase CCL13 of Humulus lupulus (European hop).